We begin with the raw amino-acid sequence, 500 residues long: Cytochrome P450 11B1, mitochondrial (500 aa).

The N-terminal 24 residues, 1–24, are a transit peptide targeting the mitochondrion; that stretch reads MAFRLKSDVRLAGSWLCLRGARAL. Cysteine 447 lines the heme pocket.

The protein belongs to the cytochrome P450 family. Heme serves as cofactor.

It localises to the mitochondrion inner membrane. It carries out the reaction a steroid + 2 reduced [adrenodoxin] + O2 + 2 H(+) = an 11beta-hydroxysteroid + 2 oxidized [adrenodoxin] + H2O. The catalysed reaction is 11-deoxycortisol + 2 reduced [adrenodoxin] + O2 + 2 H(+) = cortisol + 2 oxidized [adrenodoxin] + H2O. It catalyses the reaction 21-hydroxyprogesterone + 2 reduced [adrenodoxin] + O2 + 2 H(+) = corticosterone + 2 oxidized [adrenodoxin] + H2O. The enzyme catalyses 21-hydroxyprogesterone + 2 reduced [adrenodoxin] + O2 + 2 H(+) = 18-hydroxy-11-deoxycorticosterone + 2 oxidized [adrenodoxin] + H2O. It carries out the reaction 21-hydroxyprogesterone + 2 reduced [adrenodoxin] + O2 + 2 H(+) = 19-hydroxy-11-deoxycorticosterone + 2 oxidized [adrenodoxin] + H2O. The catalysed reaction is cortisol + 2 reduced [adrenodoxin] + O2 + 2 H(+) = 18-hydroxycortisol + 2 oxidized [adrenodoxin] + H2O. It catalyses the reaction 11-deoxycortisol + 2 reduced [adrenodoxin] + O2 + 2 H(+) = 18-hydroxy-11-deoxycortisol + 2 oxidized [adrenodoxin] + H2O. It functions in the pathway steroid biosynthesis; glucocorticoid biosynthesis. Its pathway is steroid hormone biosynthesis. Functionally, a cytochrome P450 monooxygenase involved in the biosynthesis of adrenal corticoids. Catalyzes a variety of reactions that are essential for many species, including detoxification, defense, and the formation of endogenous chemicals like steroid hormones. Steroid 11beta, 18- and 19-hydroxylase with preferred regioselectivity at 11beta, then 18, and lastly 19. Catalyzes the hydroxylation of 11-deoxycortisol and 11-deoxycorticosterone (21-hydroxyprogesterone) at 11beta position, yielding cortisol or corticosterone, respectively, but cannot produce aldosterone. Mechanistically, uses molecular oxygen inserting one oxygen atom into a substrate for hydroxylation and reducing the second into a water molecule. Two electrons are provided by NADPH via a two-protein mitochondrial transfer system comprising flavoprotein FDXR (adrenodoxin/ferredoxin reductase) and nonheme iron-sulfur protein FDX1 or FDX2 (adrenodoxin/ferredoxin). Due to its lack of 18-oxidation activity, it is incapable of generating aldosterone. Could also be involved in the androgen metabolic pathway. The protein is Cytochrome P450 11B1, mitochondrial (CYP11B1) of Cavia porcellus (Guinea pig).